The chain runs to 112 residues: Large ribosomal subunit protein eL30 (112 aa).

This sequence belongs to the eukaryotic ribosomal protein eL30 family. As to expression, expressed in roots and leaves.

The chain is Large ribosomal subunit protein eL30 from Triticum aestivum (Wheat).